The chain runs to 440 residues: COP9 signalosome complex subunit 5 (440 aa).

The MPN domain maps to 71–218; it reads VLISKLSCEK…MGAFRTIESK (148 aa). Zn(2+) is bound by residues histidine 164, histidine 166, and aspartate 177. A JAMM motif motif is present at residues 164-177; that stretch reads HSHPGYDCWLSNID. Polar residues predominate over residues 319–341; that stretch reads TQRGDSTETSSFGSMFSGDNTSD. Disordered stretches follow at residues 319-343 and 376-400; these read TQRGDSTETSSFGSMFSGDNTSDVD and SRSTDNFHNSKKRMNSNQEKCHDEG.

Belongs to the peptidase M67A family. CSN5 subfamily. In terms of assembly, component of a COP9 signalosome-like (CSN) complex, composed of at least RRI1/CSN5, CSN9, RRI2/CSN10, PCI8/CSN11, CSN12 and CSI1. Within this complex it probably interacts directly with CSN12. Also interacts with RPN5. A divalent metal cation serves as cofactor.

It is found in the cytoplasm. The protein resides in the nucleus. Its function is as follows. Catalytic component of the COP9 signalosome (CSN) complex that acts as an regulator of the ubiquitin (Ubl) conjugation pathway by mediating the deneddylation of the cullin subunit of SCF-type E3 ubiquitin-protein ligase complexes. The CSN complex is involved in the regulation of the mating pheromone response. The chain is COP9 signalosome complex subunit 5 (RRI1) from Saccharomyces cerevisiae (strain YJM789) (Baker's yeast).